The following is a 618-amino-acid chain: Sphingomyelin phosphodiesterase 2 (618 aa).

The signal sequence occupies residues 1–22 (MQQPLIILGIGIVLALVSNVES). One can recognise a Saposin B-type domain in the interval 68–151 (RKMSCLFCTF…AFIANCGHSD (84 aa)). 3 disulfides stabilise this stretch: C72/C147, C75/C140, and C103/C114. N89 carries an N-linked (GlcNAc...) asparagine glycan. N159 carries an N-linked (GlcNAc...) asparagine glycan. Residues D189 and H191 each contribute to the Zn(2+) site. 2 cysteine pairs are disulfide-bonded: C204/C216 and C217/C249. D278 provides a ligand contact to Zn(2+). N-linked (GlcNAc...) asparagine glycosylation occurs at N298. Zn(2+) is bound by residues N318, H427, H461, and H463. The cysteines at positions 387 and 435 are disulfide-linked. Residues N525 and N568 are each glycosylated (N-linked (GlcNAc...) asparagine). Intrachain disulfides connect C588-C594 and C600-C613.

Belongs to the acid sphingomyelinase family. It depends on Zn(2+) as a cofactor.

It is found in the secreted. It carries out the reaction a sphingomyelin + H2O = phosphocholine + an N-acylsphing-4-enine + H(+). It catalyses the reaction an N-acyl-15-methylhexadecasphing-4-enine-1-phosphocholine + H2O = an N-acyl-15-methylhexadecasphing-4-enine + phosphocholine + H(+). The protein operates within lipid metabolism; sphingolipid metabolism. Functionally, sphingomyelin phosphodiesterase (sphingomyelinase) that converts sphingomyelin (N-acyl-sphingoid-1-phosphocholine) to ceramide (N-acyl-sphingoid base) and phosphocholine at acidic pH. Displays its enzymatic activity when secreted. May play distinct roles in signaling. In Caenorhabditis elegans, this protein is Sphingomyelin phosphodiesterase 2 (asm-2).